Here is a 167-residue protein sequence, read N- to C-terminus: Large ribosomal subunit protein uL10 (167 aa).

The protein belongs to the universal ribosomal protein uL10 family. In terms of assembly, part of the ribosomal stalk of the 50S ribosomal subunit. The N-terminus interacts with L11 and the large rRNA to form the base of the stalk. The C-terminus forms an elongated spine to which L12 dimers bind in a sequential fashion forming a multimeric L10(L12)X complex.

In terms of biological role, forms part of the ribosomal stalk, playing a central role in the interaction of the ribosome with GTP-bound translation factors. This Cytophaga hutchinsonii (strain ATCC 33406 / DSM 1761 / CIP 103989 / NBRC 15051 / NCIMB 9469 / D465) protein is Large ribosomal subunit protein uL10.